Reading from the N-terminus, the 181-residue chain is Malignant T-cell-amplified sequence 1 (181 aa).

The region spanning 92-171 (LPHQQVDKGA…IGIENVHYLN (80 aa)) is the PUA domain.

The protein belongs to the MCTS1 family.

The protein resides in the cytoplasm. Functionally, plays a role as translation enhancer and involved in cell cycle regulation. This is Malignant T-cell-amplified sequence 1 (mcts1) from Danio rerio (Zebrafish).